The primary structure comprises 194 residues: Cytochrome c oxidase assembly protein CtaG (194 aa).

Residues 1–12 (MALRGPAKTVAQ) are Cytoplasmic-facing. Residues 13-35 (TVSVVIFMGALAWASVPLYDWFC) form a helical; Signal-anchor for type II membrane protein membrane-spanning segment. Residues 36–194 (RVTGFGGVTG…IEENSDTSLN (159 aa)) lie on the Periplasmic side of the membrane.

This sequence belongs to the COX11/CtaG family.

Its subcellular location is the cell inner membrane. Its function is as follows. Exerts its effect at some terminal stage of cytochrome c oxidase synthesis, probably by being involved in the insertion of the copper B into subunit I. In Roseobacter denitrificans (strain ATCC 33942 / OCh 114) (Erythrobacter sp. (strain OCh 114)), this protein is Cytochrome c oxidase assembly protein CtaG.